The primary structure comprises 123 residues: Acidic phospholipase A2 (123 aa).

Disulfide bonds link cysteine 26–cysteine 116, cysteine 28–cysteine 44, cysteine 43–cysteine 95, cysteine 49–cysteine 123, cysteine 50–cysteine 88, cysteine 57–cysteine 81, and cysteine 75–cysteine 86. Positions 27, 29, and 31 each coordinate Ca(2+). Histidine 47 is an active-site residue. Position 48 (aspartate 48) interacts with Ca(2+). The active site involves aspartate 89.

This sequence belongs to the phospholipase A2 family. Group II subfamily. D49 sub-subfamily. Homodimer. Ca(2+) serves as cofactor. As to expression, expressed by the venom gland.

It localises to the secreted. It catalyses the reaction a 1,2-diacyl-sn-glycero-3-phosphocholine + H2O = a 1-acyl-sn-glycero-3-phosphocholine + a fatty acid + H(+). Functionally, snake venom phospholipase A2 (PLA2) that inhibits ADP-induced platelet aggregation. PLA2 catalyzes the calcium-dependent hydrolysis of the 2-acyl groups in 3-sn-phosphoglycerides. The chain is Acidic phospholipase A2 from Deinagkistrodon acutus (Hundred-pace snake).